The chain runs to 403 residues: CCA-adding enzyme (403 aa).

The ATP site is built by Gly32 and Arg35. The CTP site is built by Gly32 and Arg35. Residues Asp45 and Asp47 each coordinate Mg(2+). The ATP site is built by Arg116, Asp159, Arg162, Arg165, and Arg168. Positions 116, 159, 162, 165, and 168 each coordinate CTP.

It belongs to the tRNA nucleotidyltransferase/poly(A) polymerase family. Bacterial CCA-adding enzyme type 3 subfamily. Homodimer. The cofactor is Mg(2+).

It catalyses the reaction a tRNA precursor + 2 CTP + ATP = a tRNA with a 3' CCA end + 3 diphosphate. The catalysed reaction is a tRNA with a 3' CCA end + 2 CTP + ATP = a tRNA with a 3' CCACCA end + 3 diphosphate. In terms of biological role, catalyzes the addition and repair of the essential 3'-terminal CCA sequence in tRNAs without using a nucleic acid template. Adds these three nucleotides in the order of C, C, and A to the tRNA nucleotide-73, using CTP and ATP as substrates and producing inorganic pyrophosphate. tRNA 3'-terminal CCA addition is required both for tRNA processing and repair. Also involved in tRNA surveillance by mediating tandem CCA addition to generate a CCACCA at the 3' terminus of unstable tRNAs. While stable tRNAs receive only 3'-terminal CCA, unstable tRNAs are marked with CCACCA and rapidly degraded. This is CCA-adding enzyme from Leuconostoc citreum (strain KM20).